A 468-amino-acid chain; its full sequence is MITTRFAPSPTGFLHVGGVRTALFSWLYAKNNNGKFILRIEDTDLERSTQEAVDAILDGMSWLGLKNDGEIYYQTKRFDRYKEVIQELIADGKAYYCSCSKERLEELREYQQANNLKTGYDGKCRDANYIPQQGESYVVRFKNPQDGVVSWDDAVKGRISISNHELDDMIIQRADGSPTYNFCVVVDDIDMAITHIIRGDDHVNNTPKQINIYKALNANVPIFAHVPMILGPDGAKLSKRHGAVNVMQYREDGYLPQAILNYLVRLGWSHGDQEIFSIEEMIKAFNLEHINASPSRFDFEKLKWLNKHYIKESKFDDIQTEVEYHFAKTGLDISNGPDLKELVAVMAEKVDTLVELAEKSSYFYSDDISYDENAVKKHIKASTGEIFVKLLENFEALDAQQWQDPDVLHNIVSTTAEQCQVGMGKVGMPLRVAITGSGQSPDIGITLKLLGKNKVVARLTKALEELCK.

The short motif at 8-18 (PSPTGFLHVGG) is the 'HIGH' region element. Cys-97, Cys-99, Cys-124, and Asp-126 together coordinate Zn(2+). A 'KMSKS' region motif is present at residues 236 to 240 (KLSKR). Lys-239 provides a ligand contact to ATP.

Belongs to the class-I aminoacyl-tRNA synthetase family. Glutamate--tRNA ligase type 1 subfamily. Monomer. Zn(2+) is required as a cofactor.

Its subcellular location is the cytoplasm. It carries out the reaction tRNA(Glu) + L-glutamate + ATP = L-glutamyl-tRNA(Glu) + AMP + diphosphate. Catalyzes the attachment of glutamate to tRNA(Glu) in a two-step reaction: glutamate is first activated by ATP to form Glu-AMP and then transferred to the acceptor end of tRNA(Glu). The sequence is that of Glutamate--tRNA ligase from Francisella tularensis subsp. tularensis (strain SCHU S4 / Schu 4).